The sequence spans 220 residues: Small ribosomal subunit protein uS3 (220 aa).

The region spanning isoleucine 43–lysine 111 is the KH type-2 domain.

The protein belongs to the universal ribosomal protein uS3 family. In terms of assembly, part of the 30S ribosomal subunit. Forms a tight complex with proteins S10 and S14.

Binds the lower part of the 30S subunit head. Binds mRNA in the 70S ribosome, positioning it for translation. This is Small ribosomal subunit protein uS3 from Tropheryma whipplei (strain TW08/27) (Whipple's bacillus).